The following is a 283-amino-acid chain: tRNA-cytidine(32) 2-sulfurtransferase (283 aa).

Positions 37–42 (SGGKDS) match the PP-loop motif motif. Positions 112, 115, and 203 each coordinate [4Fe-4S] cluster.

Belongs to the TtcA family. In terms of assembly, homodimer. Requires Mg(2+) as cofactor. It depends on [4Fe-4S] cluster as a cofactor.

It is found in the cytoplasm. The enzyme catalyses cytidine(32) in tRNA + S-sulfanyl-L-cysteinyl-[cysteine desulfurase] + AH2 + ATP = 2-thiocytidine(32) in tRNA + L-cysteinyl-[cysteine desulfurase] + A + AMP + diphosphate + H(+). It functions in the pathway tRNA modification. Functionally, catalyzes the ATP-dependent 2-thiolation of cytidine in position 32 of tRNA, to form 2-thiocytidine (s(2)C32). The sulfur atoms are provided by the cysteine/cysteine desulfurase (IscS) system. The polypeptide is tRNA-cytidine(32) 2-sulfurtransferase (Legionella pneumophila subsp. pneumophila (strain Philadelphia 1 / ATCC 33152 / DSM 7513)).